The primary structure comprises 292 residues: Tricin synthase 2 (292 aa).

The segment at 21 to 46 (RTTPASRVSSTAMAAANGDASHGANG) is disordered. Residues 23 to 32 (TPASRVSSTA) show a composition bias toward polar residues. Residues Ser108, Glu130, 132-133 (GV), Ser138, Asp156, and Ala185 each bind S-adenosyl-L-methionine. A divalent metal cation is bound at residue Asp208. Asp210 serves as a coordination point for S-adenosyl-L-methionine. A divalent metal cation is bound by residues Asp234 and Asn235.

This sequence belongs to the class I-like SAM-binding methyltransferase superfamily. Cation-dependent O-methyltransferase family. CCoAMT subfamily. The cofactor is Mg(2+). Requires Mn(2+) as cofactor. As to expression, expressed in stems only.

It carries out the reaction tricetin + 2 S-adenosyl-L-methionine = 3',5'-di-O-methyltricetin + 2 S-adenosyl-L-homocysteine + 2 H(+). Its function is as follows. Catalyzes the stepwise methylation of tricetin to its 3'-mono- and 3',5'-dimethyl ethers. No 3',4',5'-trimethylated ester derivatives are produced. Can use caffeoyl CoA, 5-hydroxyferulic acid, luteolin, tricetin, quercetin, myrcetin and 7,8-dihydroxyflavone as substrates, but not naringenin, apigenin or kaempferol. The 2,3-double bond and the O-dihydroxyl group of the substrate are both required for catalytic activity of the enzyme. In Oryza sativa subsp. japonica (Rice), this protein is Tricin synthase 2 (ROMT-17).